We begin with the raw amino-acid sequence, 1906 residues long: A disintegrin and metalloproteinase with thrombospondin motifs 20 (1906 aa).

The signal sequence occupies residues M1 to F26. The propeptide occupies H27–R249. Residues N92 and N221 are each glycosylated (N-linked (GlcNAc...) asparagine). The tract at residues P201–T222 is disordered. The region spanning R255–P464 is the Peptidase M12B domain. 11 disulfides stabilise this stretch: C330-C383, C359-C365, C377-C459, C415-C443, C486-C508, C497-C518, C503-C537, C531-C542, C565-C602, C569-C607, and C580-C592. H399 contacts Zn(2+). E400 is a catalytic residue. The Zn(2+) site is built by H403 and H409. The Disintegrin domain maps to N465 to V552. Residues D553–P608 form the TSP type-1 1 domain. N-linked (GlcNAc...) asparagine glycans are attached at residues N714, N798, and N805. A spacer region spans residues A721 to N842. 7 consecutive TSP type-1 domains span residues L843 to E901, I906 to V962, V962 to E1015, P1017 to A1074, S1075 to L1131, R1148 to S1202, and P1203 to P1260. N1057 is a glycosylation site (N-linked (GlcNAc...) asparagine). Residues R1265 to A1295 are disordered. Over residues A1266–P1277 the composition is skewed to polar residues. TSP type-1 domains follow at residues R1300–G1351, P1354–P1411, E1412–R1465, R1468–M1526, R1527–K1584, Y1585–C1648, and H1650–K1706. N1562 is a glycosylation site (N-linked (GlcNAc...) asparagine). Residues L1707–L1906 enclose the GON domain. N1719, N1759, and N1777 each carry an N-linked (GlcNAc...) asparagine glycan.

The cofactor is Zn(2+). Post-translationally, the precursor is cleaved by a furin endopeptidase. In terms of processing, glycosylated. Can be O-fucosylated by POFUT2 on a serine or a threonine residue found within the consensus sequence C1-X(2)-(S/T)-C2-G of the TSP type-1 repeat domains where C1 and C2 are the first and second cysteine residue of the repeat, respectively. Fucosylated repeats can then be further glycosylated by the addition of a beta-1,3-glucose residue by the glucosyltransferase, B3GALTL. Fucosylation mediates the efficient secretion of ADAMTS family members. Can also be C-glycosylated with one or two mannose molecules on tryptophan residues within the consensus sequence W-X-X-W of the TPRs, and N-glycosylated. These other glycosylations can also facilitate secretion. As to expression, expressed at low level in testis and brain.

The protein resides in the secreted. It localises to the extracellular space. The protein localises to the extracellular matrix. May play a role in tissue-remodeling process occurring in both normal and pathological conditions. May have a protease-independent function in the transport from the endoplasmic reticulum to the Golgi apparatus of secretory cargos, mediated by the GON domain. The protein is A disintegrin and metalloproteinase with thrombospondin motifs 20 (Adamts20) of Mus musculus (Mouse).